Reading from the N-terminus, the 193-residue chain is Large ribosomal subunit protein bL25 (193 aa).

It belongs to the bacterial ribosomal protein bL25 family. CTC subfamily. Part of the 50S ribosomal subunit; part of the 5S rRNA/L5/L18/L25 subcomplex. Contacts the 5S rRNA. Binds to the 5S rRNA independently of L5 and L18.

Functionally, this is one of the proteins that binds to the 5S RNA in the ribosome where it forms part of the central protuberance. The sequence is that of Large ribosomal subunit protein bL25 from Clostridium tetani (strain Massachusetts / E88).